The primary structure comprises 174 residues: Inactive signal peptidase IA (174 aa).

The Cytoplasmic portion of the chain corresponds to 1–7; sequence MKKVVKY. Residues 8–28 traverse the membrane as a helical segment; that stretch reads LISLILAIIIVLFVQTFVIVG. Residues 29–174 lie on the Extracellular side of the membrane; it reads HVIPNNDMSP…FSKWTIQFKS (146 aa).

It belongs to the peptidase S26 family.

The protein localises to the cell membrane. Catalytically inactive. The sequence is that of Inactive signal peptidase IA (spsA) from Staphylococcus aureus (strain Mu50 / ATCC 700699).